A 131-amino-acid polypeptide reads, in one-letter code: Protein TAP2 (131 aa).

Positions 1 to 22 (MAKSSPTYTVLFLLGLLALSTA) are cleaved as a signal peptide. The segment at 75 to 101 (ARSGGETDVKKMEGSMPDQGKTAGRDQ) is disordered.

As to expression, tapetum of anthers.

The protein is Protein TAP2 (TAP2) of Antirrhinum majus (Garden snapdragon).